The sequence spans 442 residues: tRNA-2-methylthio-N(6)-dimethylallyladenosine synthase (442 aa).

The MTTase N-terminal domain occupies 2-120 (KKVFIRTFGC…LPKMIVDKET (119 aa)). Residues C11, C49, C83, C157, C161, and C164 each contribute to the [4Fe-4S] cluster site. The Radical SAM core domain maps to 143–375 (RVEGGAAFVS…NEVIEAETAR (233 aa)). One can recognise a TRAM domain in the interval 378 to 441 (QTMIGTVQRC…TFSLRGKIVE (64 aa)).

It belongs to the methylthiotransferase family. MiaB subfamily. Monomer. The cofactor is [4Fe-4S] cluster.

The protein resides in the cytoplasm. The enzyme catalyses N(6)-dimethylallyladenosine(37) in tRNA + (sulfur carrier)-SH + AH2 + 2 S-adenosyl-L-methionine = 2-methylsulfanyl-N(6)-dimethylallyladenosine(37) in tRNA + (sulfur carrier)-H + 5'-deoxyadenosine + L-methionine + A + S-adenosyl-L-homocysteine + 2 H(+). In terms of biological role, catalyzes the methylthiolation of N6-(dimethylallyl)adenosine (i(6)A), leading to the formation of 2-methylthio-N6-(dimethylallyl)adenosine (ms(2)i(6)A) at position 37 in tRNAs that read codons beginning with uridine. In Neisseria gonorrhoeae (strain NCCP11945), this protein is tRNA-2-methylthio-N(6)-dimethylallyladenosine synthase.